Consider the following 283-residue polypeptide: Bifunctional protein FolD (283 aa).

166–168 (GAS) serves as a coordination point for NADP(+).

It belongs to the tetrahydrofolate dehydrogenase/cyclohydrolase family. As to quaternary structure, homodimer.

The catalysed reaction is (6R)-5,10-methylene-5,6,7,8-tetrahydrofolate + NADP(+) = (6R)-5,10-methenyltetrahydrofolate + NADPH. It catalyses the reaction (6R)-5,10-methenyltetrahydrofolate + H2O = (6R)-10-formyltetrahydrofolate + H(+). It functions in the pathway one-carbon metabolism; tetrahydrofolate interconversion. Catalyzes the oxidation of 5,10-methylenetetrahydrofolate to 5,10-methenyltetrahydrofolate and then the hydrolysis of 5,10-methenyltetrahydrofolate to 10-formyltetrahydrofolate. This chain is Bifunctional protein FolD, found in Coxiella burnetii (strain CbuK_Q154) (Coxiella burnetii (strain Q154)).